A 116-amino-acid polypeptide reads, in one-letter code: Protein Rev (116 aa).

A phosphoserine; by host CK2 mark is found at Ser5 and Ser8. The interval 18-26 (IIKILYQSN) is homomultimerization. The interval 24-49 (QSNPHPSPEGTRQARRNRRRRWRERQ) is disordered. A Nuclear localization signal and RNA-binding (RRE) motif is present at residues 34-50 (TRQARRNRRRRWRERQR). The span at 36–47 (QARRNRRRRWRE) shows a compositional bias: basic residues. The short motif at 73–84 (LQLPPLDRLTLD) is the Nuclear export signal and binding to XPO1 element. Residues Ser92 and Ser99 each carry the phosphoserine; by host modification.

This sequence belongs to the HIV-1 REV protein family. In terms of assembly, homomultimer; when bound to the RRE. Multimeric assembly is essential for activity and may involve XPO1. Binds to human KPNB1, XPO1, TNPO1, RANBP5 and IPO7. Interacts with the viral Integrase. Interacts with human KHDRBS1. Interacts with human NAP1; this interaction decreases Rev multimerization and stimulates its activity. Interacts with human DEAD-box helicases DDX3 and DDX24; these interactions may serve for viral RNA export to the cytoplasm and packaging, respectively. Interacts with human PSIP1; this interaction may inhibit HIV-1 DNA integration by promoting dissociation of the Integrase-LEDGF/p75 complex. Post-translationally, asymmetrically arginine dimethylated at one site by host PRMT6. Methylation impairs the RNA-binding activity and export of viral RNA from the nucleus to the cytoplasm. Phosphorylated by protein kinase CK2. Presence of, and maybe binding to the N-terminus of the regulatory beta subunit of CK2 is necessary for CK2-mediated Rev's phosphorylation.

The protein resides in the host nucleus. It localises to the host nucleolus. The protein localises to the host cytoplasm. In terms of biological role, escorts unspliced or incompletely spliced viral pre-mRNAs (late transcripts) out of the nucleus of infected cells. These pre-mRNAs carry a recognition sequence called Rev responsive element (RRE) located in the env gene, that is not present in fully spliced viral mRNAs (early transcripts). This function is essential since most viral proteins are translated from unspliced or partially spliced pre-mRNAs which cannot exit the nucleus by the pathway used by fully processed cellular mRNAs. Rev itself is translated from a fully spliced mRNA that readily exits the nucleus. Rev's nuclear localization signal (NLS) binds directly to KPNB1/Importin beta-1 without previous binding to KPNA1/Importin alpha-1. KPNB1 binds to the GDP bound form of RAN (Ran-GDP) and targets Rev to the nucleus. In the nucleus, the conversion from Ran-GDP to Ran-GTP dissociates Rev from KPNB1 and allows Rev's binding to the RRE in viral pre-mRNAs. Rev multimerization on the RRE via cooperative assembly exposes its nuclear export signal (NES) to the surface. Rev can then form a complex with XPO1/CRM1 and Ran-GTP, leading to nuclear export of the complex. Conversion from Ran-GTP to Ran-GDP mediates dissociation of the Rev/RRE/XPO1/RAN complex, so that Rev can return to the nucleus for a subsequent round of export. Beside KPNB1, also seems to interact with TNPO1/Transportin-1, RANBP5/IPO5 and IPO7/RANBP7 for nuclear import. The nucleoporin-like HRB/RIP is an essential cofactor that probably indirectly interacts with Rev to release HIV RNAs from the perinuclear region to the cytoplasm. This is Protein Rev from Human immunodeficiency virus type 1 group M subtype B (isolate SF33) (HIV-1).